We begin with the raw amino-acid sequence, 339 residues long: DNA-directed RNA polymerase subunit alpha (339 aa).

The interval Met1 to Asp237 is alpha N-terminal domain (alpha-NTD). The alpha C-terminal domain (alpha-CTD) stretch occupies residues Phe256 to Glu339.

The protein belongs to the RNA polymerase alpha chain family. In terms of assembly, homodimer. The RNAP catalytic core consists of 2 alpha, 1 beta, 1 beta' and 1 omega subunit. When a sigma factor is associated with the core the holoenzyme is formed, which can initiate transcription.

It catalyses the reaction RNA(n) + a ribonucleoside 5'-triphosphate = RNA(n+1) + diphosphate. Functionally, DNA-dependent RNA polymerase catalyzes the transcription of DNA into RNA using the four ribonucleoside triphosphates as substrates. The protein is DNA-directed RNA polymerase subunit alpha of Desulfosudis oleivorans (strain DSM 6200 / JCM 39069 / Hxd3) (Desulfococcus oleovorans).